We begin with the raw amino-acid sequence, 155 residues long: SsrA-binding protein (155 aa).

It belongs to the SmpB family.

It localises to the cytoplasm. Functionally, required for rescue of stalled ribosomes mediated by trans-translation. Binds to transfer-messenger RNA (tmRNA), required for stable association of tmRNA with ribosomes. tmRNA and SmpB together mimic tRNA shape, replacing the anticodon stem-loop with SmpB. tmRNA is encoded by the ssrA gene; the 2 termini fold to resemble tRNA(Ala) and it encodes a 'tag peptide', a short internal open reading frame. During trans-translation Ala-aminoacylated tmRNA acts like a tRNA, entering the A-site of stalled ribosomes, displacing the stalled mRNA. The ribosome then switches to translate the ORF on the tmRNA; the nascent peptide is terminated with the 'tag peptide' encoded by the tmRNA and targeted for degradation. The ribosome is freed to recommence translation, which seems to be the essential function of trans-translation. This chain is SsrA-binding protein, found in Streptococcus equi subsp. zooepidemicus (strain MGCS10565).